The following is a 479-amino-acid chain: FK506-binding protein 4 (479 aa).

Disordered regions lie at residues 39–106, 141–162, and 205–367; these read IDPD…ARKL, VKGKAPATDDDDEDAESDEGLD, and GNYV…KTTG. Composition is skewed to acidic residues over residues 40–49, 68–93, 148–162, and 214–256; these read DPDEAPEFDD, LDEEDSDDDYEDEDDSEDDSEDDEEV, TDDDDEDAESDEGLD, and PRDD…DLDG. Basic and acidic residues-rich tracts occupy residues 272–299, 325–334, and 348–364; these read APKLVDAKGKKKRGADEAALEAKDDKAK, AKPEQKETKK, and SKERKPDEKKPADKAEK. The PPIase FKBP-type domain maps to 393-479; the sequence is GNTVAMRYIG…IFDVKLLEIK (87 aa).

This sequence belongs to the FKBP-type PPIase family. FKBP3/4 subfamily. Binds to histones H3 and H4.

The protein resides in the nucleus. It catalyses the reaction [protein]-peptidylproline (omega=180) = [protein]-peptidylproline (omega=0). With respect to regulation, inhibited by both FK506 and rapamycin. In terms of biological role, PPIase that acts as a histone chaperone. Histone proline isomerase that increases the rate of cis-trans isomerization at prolines on the histone H3 N-terminal tail. Proline isomerization influences H3 methylation thereby regulating gene expression. This is FK506-binding protein 4 (fpr4) from Emericella nidulans (strain FGSC A4 / ATCC 38163 / CBS 112.46 / NRRL 194 / M139) (Aspergillus nidulans).